The following is a 196-amino-acid chain: GTP cyclohydrolase 1 (196 aa).

Zn(2+) is bound by residues Cys-86, His-89, and Cys-158.

The protein belongs to the GTP cyclohydrolase I family. In terms of assembly, toroid-shaped homodecamer, composed of two pentamers of five dimers.

The enzyme catalyses GTP + H2O = 7,8-dihydroneopterin 3'-triphosphate + formate + H(+). The protein operates within cofactor biosynthesis; 7,8-dihydroneopterin triphosphate biosynthesis; 7,8-dihydroneopterin triphosphate from GTP: step 1/1. This Clostridium botulinum (strain Langeland / NCTC 10281 / Type F) protein is GTP cyclohydrolase 1.